The following is a 235-amino-acid chain: Purine nucleoside phosphorylase DeoD-type (235 aa).

An a purine D-ribonucleoside-binding site is contributed by His-4. Phosphate-binding positions include Gly-20, Arg-24, Arg-43, and 87–90; that span reads RVGT. A purine D-ribonucleoside is bound by residues Glu-162, 179–181, and 203–204; these read EME and SD. The Proton donor role is filled by Asp-204.

This sequence belongs to the PNP/UDP phosphorylase family. Homohexamer; trimer of homodimers.

It catalyses the reaction a purine D-ribonucleoside + phosphate = a purine nucleobase + alpha-D-ribose 1-phosphate. The enzyme catalyses a purine 2'-deoxy-D-ribonucleoside + phosphate = a purine nucleobase + 2-deoxy-alpha-D-ribose 1-phosphate. Its function is as follows. Catalyzes the reversible phosphorolytic breakdown of the N-glycosidic bond in the beta-(deoxy)ribonucleoside molecules, with the formation of the corresponding free purine bases and pentose-1-phosphate. The polypeptide is Purine nucleoside phosphorylase DeoD-type (Bacillus cereus (strain ATCC 14579 / DSM 31 / CCUG 7414 / JCM 2152 / NBRC 15305 / NCIMB 9373 / NCTC 2599 / NRRL B-3711)).